Reading from the N-terminus, the 497-residue chain is Aluminum-activated malate transporter 10 (497 aa).

Helical transmembrane passes span Lys-66–Met-86, Pro-88–Phe-108, Val-123–Ser-143, Val-148–Val-168, Ala-173–Gly-193, and Ile-210–Gly-230. Disordered stretches follow at residues Pro-413–Thr-437 and Asp-476–Ser-497. A compositionally biased stretch (basic and acidic residues) spans Asn-417–Thr-436. A compositionally biased stretch (polar residues) spans Asp-487–Ser-497.

This sequence belongs to the aromatic acid exporter (TC 2.A.85) family.

The protein resides in the membrane. Malate transporter. This Arabidopsis thaliana (Mouse-ear cress) protein is Aluminum-activated malate transporter 10 (ALMT10).